The sequence spans 89 residues: Cytochrome b-c1 complex subunit 6, mitochondrial (89 aa).

The N-terminal 13 residues, 1–13, are a transit peptide targeting the mitochondrion; that stretch reads MGLEDERKMLTGS. A disordered region spans residues 1–27; that stretch reads MGLEDERKMLTGSGDPKEEEEEELVDP. 2 disulfide bridges follow: Cys35–Cys79 and Cys51–Cys65. Position 40 is an N6-acetyllysine (Lys40). An N6-acetyllysine modification is found at Lys83.

This sequence belongs to the UQCRH/QCR6 family. As to quaternary structure, component of the ubiquinol-cytochrome c oxidoreductase (cytochrome b-c1 complex, complex III, CIII), a multisubunit enzyme composed of 11 subunits. The complex is composed of 3 respiratory subunits cytochrome b, cytochrome c1 and Rieske protein UQCRFS1, 2 core protein subunits UQCRC1/QCR1 and UQCRC2/QCR2, and 6 low-molecular weight protein subunits UQCRH/QCR6, UQCRB/QCR7, UQCRQ/QCR8, UQCR10/QCR9, UQCR11/QCR10 and subunit 9, the cleavage product of Rieske protein UQCRFS1. The complex exists as an obligatory dimer and forms supercomplexes (SCs) in the inner mitochondrial membrane with NADH-ubiquinone oxidoreductase (complex I, CI) and cytochrome c oxidase (complex IV, CIV), resulting in different assemblies (supercomplex SCI(1)III(2)IV(1) and megacomplex MCI(2)III(2)IV(2)).

It is found in the mitochondrion inner membrane. Its function is as follows. Component of the ubiquinol-cytochrome c oxidoreductase, a multisubunit transmembrane complex that is part of the mitochondrial electron transport chain which drives oxidative phosphorylation. The respiratory chain contains 3 multisubunit complexes succinate dehydrogenase (complex II, CII), ubiquinol-cytochrome c oxidoreductase (cytochrome b-c1 complex, complex III, CIII) and cytochrome c oxidase (complex IV, CIV), that cooperate to transfer electrons derived from NADH and succinate to molecular oxygen, creating an electrochemical gradient over the inner membrane that drives transmembrane transport and the ATP synthase. The cytochrome b-c1 complex catalyzes electron transfer from ubiquinol to cytochrome c, linking this redox reaction to translocation of protons across the mitochondrial inner membrane, with protons being carried across the membrane as hydrogens on the quinol. In the process called Q cycle, 2 protons are consumed from the matrix, 4 protons are released into the intermembrane space and 2 electrons are passed to cytochrome c. The protein is Cytochrome b-c1 complex subunit 6, mitochondrial (Uqcrh) of Rattus norvegicus (Rat).